We begin with the raw amino-acid sequence, 95 residues long: Aspartyl/glutamyl-tRNA(Asn/Gln) amidotransferase subunit C (95 aa).

Belongs to the GatC family. As to quaternary structure, heterotrimer of A, B and C subunits.

The catalysed reaction is L-glutamyl-tRNA(Gln) + L-glutamine + ATP + H2O = L-glutaminyl-tRNA(Gln) + L-glutamate + ADP + phosphate + H(+). The enzyme catalyses L-aspartyl-tRNA(Asn) + L-glutamine + ATP + H2O = L-asparaginyl-tRNA(Asn) + L-glutamate + ADP + phosphate + 2 H(+). Allows the formation of correctly charged Asn-tRNA(Asn) or Gln-tRNA(Gln) through the transamidation of misacylated Asp-tRNA(Asn) or Glu-tRNA(Gln) in organisms which lack either or both of asparaginyl-tRNA or glutaminyl-tRNA synthetases. The reaction takes place in the presence of glutamine and ATP through an activated phospho-Asp-tRNA(Asn) or phospho-Glu-tRNA(Gln). This is Aspartyl/glutamyl-tRNA(Asn/Gln) amidotransferase subunit C from Dehalococcoides mccartyi (strain CBDB1).